The following is a 446-amino-acid chain: Trigger factor (446 aa).

In terms of domain architecture, PPIase FKBP-type spans 163-248 (GDIVTIDFKG…VRGIKRKKLA (86 aa)). Positions 423–446 (SKPVPPREQGAAGETAETAEATPA) are disordered. Low complexity predominate over residues 432 to 446 (GAAGETAETAEATPA).

Belongs to the FKBP-type PPIase family. Tig subfamily.

It localises to the cytoplasm. It catalyses the reaction [protein]-peptidylproline (omega=180) = [protein]-peptidylproline (omega=0). Its function is as follows. Involved in protein export. Acts as a chaperone by maintaining the newly synthesized protein in an open conformation. Functions as a peptidyl-prolyl cis-trans isomerase. This chain is Trigger factor, found in Moorella thermoacetica (strain ATCC 39073 / JCM 9320).